We begin with the raw amino-acid sequence, 440 residues long: Cell division protein DivIB (440 aa).

Residues 1–10 (MMDDKTKNDQ) are compositionally biased toward basic and acidic residues. 2 disordered regions span residues 1-97 (MMDD…DSNI) and 123-154 (QHQSAPNEQNSDSNDEETVTKKERKSKVTQLK). The Cytoplasmic portion of the chain corresponds to 1–174 (MMDDKTKNDQ…RRKRQKRIQY (174 aa)). Positions 12–21 (ESNEDKDELE) are enriched in acidic residues. Residues 27–39 (TSKKRRQRKRSKA) are compositionally biased toward basic residues. Residues 78 to 87 (DSASSHANDN) are compositionally biased toward low complexity. A compositionally biased stretch (acidic residues) spans 88–97 (NIDDSTDSNI). Residues 124–134 (HQSAPNEQNSD) are compositionally biased toward polar residues. A helical membrane pass occupies residues 175–195 (SVITILVLLIAVILIYMFSPL). In terms of domain architecture, POTRA spans 196–264 (SKIAHVNING…NTLNVDITEN (69 aa)). The Extracellular portion of the chain corresponds to 196-440 (SKIAHVNING…KINKQSSKNN (245 aa)). Residues 397–440 (YRGNTSTQSESDKNVTKSSQEENQAKEELQSVLNKINKQSSKNN) form a disordered region. Basic and acidic residues predominate over residues 406-425 (ESDKNVTKSSQEENQAKEEL). The segment covering 427–440 (SVLNKINKQSSKNN) has biased composition (polar residues).

The protein belongs to the FtsQ/DivIB family. DivIB subfamily.

It localises to the cell membrane. Functionally, cell division protein that may be involved in stabilizing or promoting the assembly of the division complex. In Staphylococcus aureus (strain MRSA252), this protein is Cell division protein DivIB.